Here is a 295-residue protein sequence, read N- to C-terminus: Acetylglutamate kinase (295 aa).

Substrate contacts are provided by residues 66 to 67 (GG), Arg88, and Asn193.

It belongs to the acetylglutamate kinase family. ArgB subfamily.

It localises to the cytoplasm. It carries out the reaction N-acetyl-L-glutamate + ATP = N-acetyl-L-glutamyl 5-phosphate + ADP. It participates in amino-acid biosynthesis; L-arginine biosynthesis; N(2)-acetyl-L-ornithine from L-glutamate: step 2/4. Its function is as follows. Catalyzes the ATP-dependent phosphorylation of N-acetyl-L-glutamate. This is Acetylglutamate kinase from Rhizobium leguminosarum bv. trifolii (strain WSM2304).